The sequence spans 138 residues: Basic phospholipase A2 homolog Vur-S49 (138 aa).

Positions 1–16 are cleaved as a signal peptide; that stretch reads MRALWIVAVCLIGVEG. Cystine bridges form between Cys-42/Cys-131, Cys-44/Cys-60, Cys-59/Cys-111, Cys-65/Cys-138, Cys-66/Cys-104, Cys-73/Cys-97, and Cys-91/Cys-102. The tract at residues 121–133 is important for membrane-damaging activities in eukaryotes and bacteria; heparin-binding; sequence KKYKVYLRFKCKG.

This sequence belongs to the phospholipase A2 family. Group II subfamily. S49 sub-subfamily. Expressed by the venom gland.

Its subcellular location is the secreted. In terms of biological role, snake venom phospholipase A2 homolog that lacks enzymatic activity. Is able to suppress the acetylcholine (ACh)-evoked current mediated by alpha-7 (CHRNA7)-similar nAChRs in L.stagnalis neurons (IC(50)=2.18 uM). This activity is only partially reversible and seems to be non-competitive. This Vipera renardi (Steppe viper) protein is Basic phospholipase A2 homolog Vur-S49.